The sequence spans 124 residues: Large ribosomal subunit protein bL12 (124 aa).

The protein belongs to the bacterial ribosomal protein bL12 family. Homodimer. Part of the ribosomal stalk of the 50S ribosomal subunit. Forms a multimeric L10(L12)X complex, where L10 forms an elongated spine to which 2 to 4 L12 dimers bind in a sequential fashion. Binds GTP-bound translation factors.

Functionally, forms part of the ribosomal stalk which helps the ribosome interact with GTP-bound translation factors. Is thus essential for accurate translation. The polypeptide is Large ribosomal subunit protein bL12 (Allorhizobium ampelinum (strain ATCC BAA-846 / DSM 112012 / S4) (Agrobacterium vitis (strain S4))).